Reading from the N-terminus, the 194-residue chain is CASP-like protein 2C1 (194 aa).

The Cytoplasmic segment spans residues 1–18 (MSSYMEAAAAARAAEAKT). A helical membrane pass occupies residues 19–39 (EGLLRGACALLAAAAALLVGL). Over 40 to 59 (NTQTETVLFIRKKATVKDVQ) the chain is Extracellular. Residues 60–80 (ALWVLAMAAAAAAGYHLLQLL) traverse the membrane as a helical segment. Residues 81-109 (RCFYLSRFADGKPCRHRRAIAWLCFLLDK) are Cytoplasmic-facing. The helical transmembrane segment at 110–130 (GCAYITFATTVAAAQACVVAL) threads the bilayer. Over 131–151 (YGTHALQWTKLCNIYTRFCEQ) the chain is Extracellular. Residues 152–172 (VAGSLVCAMLAAVGTALLSVV) traverse the membrane as a helical segment. The Cytoplasmic portion of the chain corresponds to 173 to 194 (SARNLFRLYPSMLSPPPSSFVG).

The protein belongs to the Casparian strip membrane proteins (CASP) family. Homodimer and heterodimers.

It localises to the cell membrane. The protein is CASP-like protein 2C1 of Oryza sativa subsp. japonica (Rice).